Consider the following 375-residue polypeptide: B3 domain-containing protein REM-like 2 (375 aa).

DNA-binding regions (TF-B3) lie at residues 51–147, 131–226, and 277–375; these read SFVA…KRLY, FVTV…YGTN, and RLVI…KSGK.

The protein resides in the nucleus. The chain is B3 domain-containing protein REM-like 2 from Arabidopsis thaliana (Mouse-ear cress).